The following is a 184-amino-acid chain: MKVIAVTGYKPFELGIFKNDHPGVECIKKALHRKLLTFVEDGLEWVIISGQLGVELWAAEVVFEMQVEYPDLKLAVFTPFLEQEENWKEDNREYYEFILSQADHVDSITKRKYESPEQFKLKNQFFIEKSDALLAVYDEEKPGSPKYIVESAKKKGEIENYHSYFILFSDLQDIIEEEQWNNAE.

This sequence belongs to the UPF0398 family.

This is UPF0398 protein BCB4264_A1614 from Bacillus cereus (strain B4264).